Reading from the N-terminus, the 345-residue chain is NADH-quinone oxidoreductase subunit H 1 (345 aa).

9 helical membrane passes run Ile11–Leu31, Pro50–Phe70, Phe84–Phe104, Val115–Gly135, Leu161–Val181, Ala187–Ile207, Tyr248–Ser268, Val277–Ile297, and Ile309–Ala329.

Belongs to the complex I subunit 1 family. NDH-1 is composed of 14 different subunits. Subunits NuoA, H, J, K, L, M, N constitute the membrane sector of the complex.

It is found in the cell inner membrane. The enzyme catalyses a quinone + NADH + 5 H(+)(in) = a quinol + NAD(+) + 4 H(+)(out). Functionally, NDH-1 shuttles electrons from NADH, via FMN and iron-sulfur (Fe-S) centers, to quinones in the respiratory chain. The immediate electron acceptor for the enzyme in this species is believed to be ubiquinone. Couples the redox reaction to proton translocation (for every two electrons transferred, four hydrogen ions are translocated across the cytoplasmic membrane), and thus conserves the redox energy in a proton gradient. This subunit may bind ubiquinone. This Cereibacter sphaeroides (strain ATCC 17023 / DSM 158 / JCM 6121 / CCUG 31486 / LMG 2827 / NBRC 12203 / NCIMB 8253 / ATH 2.4.1.) (Rhodobacter sphaeroides) protein is NADH-quinone oxidoreductase subunit H 1.